Consider the following 578-residue polypeptide: Signal peptide peptidase-like 2B (578 aa).

Positions 1–19 (MAAARLAAALLLLAAQVAC) are cleaved as a signal peptide. Residues 20–168 (EFGVLRVVSQ…APSEPVMDYN (149 aa)) lie on the Lumenal side of the membrane. Residues 61-145 (LRDLSTTQLC…LLSHRDLQDI (85 aa)) form the PA domain. Residues Asn-91 and Asn-123 are each glycosylated (N-linked (GlcNAc...) asparagine). A helical transmembrane segment spans residues 169 to 189 (MVIIFVMAVGTVAIGGYWAGS). Residues 190–216 (HDVKKYMKHKRDDGPEKQEDEAVDVTP) lie on the Cytoplasmic side of the membrane. Residues 217-237 (VMICVFVVMCCFMLVLLYYFY) traverse the membrane as a helical segment. The Lumenal portion of the chain corresponds to 238 to 239 (DR). Residues 240–260 (LVYVIIGIFCLASSTGLYSCL) form a helical membrane-spanning segment. Residues 261–286 (APFVRKLPFCTCRVPDNNLPYFHKRP) lie on the Cytoplasmic side of the membrane. The helical transmembrane segment at 287–307 (QARMLLLALFCVTVSVVWGIF) threads the bilayer. The Lumenal portion of the chain corresponds to 308 to 312 (RNEDQ). Residues 313 to 333 (WAWVLQDTLGIAFCLYMLKTI) form a helical membrane-spanning segment. Residues 334–341 (RLPTFKAC) are Cytoplasmic-facing. A helical membrane pass occupies residues 342 to 362 (TLLLLVLFIYDIFFVFITPFL). The active site involves Asp-352. The Lumenal segment spans residues 363–405 (TKSGNSIMVEVATGPSNSSTHEKLPMVLKVPRLNTSPLSLCDR). Residues 406–426 (PFSLLGFGDILVPGLLVAYCH) form a helical membrane-spanning segment. Asp-414 is an active-site residue. At 427-438 (RFDIQVQSSRIY) the chain is on the cytoplasmic side. Residues 439-459 (FVACTIAYGLGLLVTFVALVL) form a helical membrane-spanning segment. The Lumenal segment spans residues 460–463 (MQRG). The helical transmembrane segment at 464–484 (QPALLYLVPCTLLTSCTVALW) threads the bilayer. The PAL signature appears at 465–467 (PAL). Residues 485–578 (RRELGAFWTG…IPVVKPETSA (94 aa)) lie on the Cytoplasmic side of the membrane. The interval 502–578 (PQTPWAATQG…IPVVKPETSA (77 aa)) is disordered. Over residues 520–529 (SSLSEQPPSE) the composition is skewed to low complexity.

The protein belongs to the peptidase A22B family. As to quaternary structure, monomer. Homodimer. Interacts with ITM2B and TNF. In terms of processing, glycosylated.

The protein localises to the cell membrane. Its subcellular location is the golgi apparatus membrane. It localises to the lysosome membrane. The protein resides in the endosome membrane. It is found in the membrane. Its function is as follows. Intramembrane-cleaving aspartic protease (I-CLiP) that cleaves type II membrane signal peptides in the hydrophobic plane of the membrane. Functions in ITM2B and TNF processing. Catalyzes the intramembrane cleavage of the anchored fragment of shed TNF-alpha (TNF), which promotes the release of the intracellular domain (ICD) for signaling to the nucleus. May play a role in the regulation of innate and adaptive immunity. This chain is Signal peptide peptidase-like 2B, found in Mus musculus (Mouse).